The chain runs to 273 residues: Putative B3 domain-containing protein At5g58280 (273 aa).

Positions 127 to 218 form a DNA-binding region, TF-B3; the sequence is FVKSMVRSHV…KFKIYVFKGN (92 aa). Residues 225–273 form a disordered region; sequence SARKRGRATTPSEEEEEEEDKDVEESGDEEHSSRATKRSSVRLLRKRKA. Acidic residues predominate over residues 236–252; that stretch reads SEEEEEEEDKDVEESGD. Residues 258–273 are compositionally biased toward basic residues; it reads RATKRSSVRLLRKRKA.

The protein localises to the nucleus. This chain is Putative B3 domain-containing protein At5g58280, found in Arabidopsis thaliana (Mouse-ear cress).